The sequence spans 694 residues: Transcription activator of gluconeogenesis Pc22g08580 (694 aa).

The tract at residues 1–61 (MNMETKNGSP…DPSRPRRKKA (61 aa)) is disordered. Positions 17 to 55 (SGERDSADITEHEQMDVKPKTNGDSKADRKAANAKDPSR) are enriched in basic and acidic residues. The segment at residues 65-93 (CFACQRAHLTCGDERPCQRCIKRGLQDAC) is a DNA-binding region (zn(2)-C6 fungal-type). Disordered stretches follow at residues 126-240 (TLRN…GPFF), 276-300 (AAGDSPTDSAGQRGSIGRSGSAQFS), and 552-582 (TGGSAVPQSGTTSRGSFTPRGSTLENSGTGR). Residues 132–141 (PISRNGTNAV) show a composition bias toward polar residues. Residues 142-171 (NSNQQHSQQHPQQPTNPTNNNFYPTPQTQT) are compositionally biased toward low complexity. 3 stretches are compositionally biased toward polar residues: residues 172 to 234 (GSYN…SQNP), 281 to 300 (PTDSAGQRGSIGRSGSAQFS), and 552 to 581 (TGGSAVPQSGTTSRGSFTPRGSTLENSGTG).

It belongs to the ERT1/acuK family.

Its subcellular location is the nucleus. In terms of biological role, transcription factor which regulates nonfermentable carbon utilization. Activator of gluconeogenetic genes. The chain is Transcription activator of gluconeogenesis Pc22g08580 from Penicillium rubens (strain ATCC 28089 / DSM 1075 / NRRL 1951 / Wisconsin 54-1255) (Penicillium chrysogenum).